A 320-amino-acid chain; its full sequence is Polyprenal reductase 1 (320 aa).

Helical transmembrane passes span isoleucine 5–valine 25, phenylalanine 64–tryptophan 84, methionine 143–cysteine 163, proline 200–isoleucine 220, isoleucine 243–valine 263, and leucine 266–valine 286.

It belongs to the steroid 5-alpha reductase family. Polyprenal reductase subfamily. In terms of tissue distribution, expressed in roots and flowers.

The protein localises to the cell membrane. The enzyme catalyses a di-trans,poly-cis-dolichal + NADP(+) = a di-trans,poly-cis-polyprenal + NADPH + H(+). The protein operates within protein modification; protein glycosylation. Plays a key role in early steps of protein N-linked glycosylation by being involved in the conversion of polyprenol into dolichol. Acts as a polyprenal reductase that mediates the reduction of polyprenal into dolichal in a NADP-dependent mechanism. Dolichols are required for the synthesis of dolichol-linked monosaccharides and the oligosaccharide precursor used for N-glycosylation. Involved in the regulation of plant growth and reproductive processes. The protein is Polyprenal reductase 1 of Arabidopsis thaliana (Mouse-ear cress).